The following is a 282-amino-acid chain: MVLQENGYGVEEDIPTLLMAASSMDDLLAITGFNTCLSIVFYSGGMINNAIASLRNVCISLLAGIVLGFFVRYFPSEDQKKITLKRGFLVLITFVSAVLGSQPIGLHGSGGLCTLVLHFIEWTKWSQEKMKVQKIITNVWDIFQPLLFGLVGAEVSVSLLESNIVGISVSTLSLALCVRILNIYLLMCFAGFSFKEKIFIALAWMPKATVQAVLGPLALETARVSTPHLETYAKDVMTVAFLAIMITAPNGALLMGILGPKMLTRHYDPSKIKLQLSTLEHH.

The next 7 helical transmembrane spans lie at 27-47 (LLAITGFNTCLSIVFYSGGMI), 51-71 (IASLRNVCISLLAGIVLGFFV), 87-107 (GFLVLITFVSAVLGSQPIGLH), 135-155 (IITNVWDIFQPLLFGLVGAEV), 174-194 (LALCVRILNIYLLMCFAGFSF), 198-218 (IFIALAWMPKATVQAVLGPLA), and 239-259 (VAFLAIMITAPNGALLMGILG).

The protein belongs to the monovalent cation:proton antiporter 1 (CPA1) transporter (TC 2.A.36) family.

Its subcellular location is the membrane. In Homo sapiens (Human), this protein is Putative SLC9B1-like protein SLC9B1P1 (SLC9B1P1).